A 217-amino-acid chain; its full sequence is Large ribosomal subunit protein uL3 (217 aa).

The interval Val137–Ser160 is disordered.

It belongs to the universal ribosomal protein uL3 family. Part of the 50S ribosomal subunit. Forms a cluster with proteins L14 and L19.

One of the primary rRNA binding proteins, it binds directly near the 3'-end of the 23S rRNA, where it nucleates assembly of the 50S subunit. The protein is Large ribosomal subunit protein uL3 of Clavibacter michiganensis subsp. michiganensis (strain NCPPB 382).